Consider the following 357-residue polypeptide: Chorismate synthase (357 aa).

Arg-47 contacts NADP(+). Residues 123–125 (RAS), Gly-281, 296–300 (KPTSS), and Arg-324 each bind FMN.

The protein belongs to the chorismate synthase family. As to quaternary structure, homotetramer. The cofactor is FMNH2.

It carries out the reaction 5-O-(1-carboxyvinyl)-3-phosphoshikimate = chorismate + phosphate. It participates in metabolic intermediate biosynthesis; chorismate biosynthesis; chorismate from D-erythrose 4-phosphate and phosphoenolpyruvate: step 7/7. Functionally, catalyzes the anti-1,4-elimination of the C-3 phosphate and the C-6 proR hydrogen from 5-enolpyruvylshikimate-3-phosphate (EPSP) to yield chorismate, which is the branch point compound that serves as the starting substrate for the three terminal pathways of aromatic amino acid biosynthesis. This reaction introduces a second double bond into the aromatic ring system. In Chlamydia trachomatis serovar D (strain ATCC VR-885 / DSM 19411 / UW-3/Cx), this protein is Chorismate synthase.